Reading from the N-terminus, the 1057-residue chain is Glycine dehydrogenase (decarboxylating), mitochondrial (1057 aa).

Residues 1–86 (MERARRLANR…GVGYPSQSRS (86 aa)) constitute a mitochondrion transit peptide. Residues 18 to 27 (SEAKQNRKTE) are compositionally biased toward basic and acidic residues. Positions 18-47 (SEAKQNRKTESTSTTTTTPLPFSLSGSSSR) are disordered. Positions 28 to 47 (STSTTTTTPLPFSLSGSSSR) are enriched in low complexity. At Lys-792 the chain carries N6-(pyridoxal phosphate)lysine.

This sequence belongs to the GcvP family. Homodimer. The glycine cleavage system is composed of four proteins: P, T, L and H. Requires pyridoxal 5'-phosphate as cofactor. Highly expressed in leaves. Detected in roots and embryos.

The protein localises to the mitochondrion. The catalysed reaction is N(6)-[(R)-lipoyl]-L-lysyl-[glycine-cleavage complex H protein] + glycine + H(+) = N(6)-[(R)-S(8)-aminomethyldihydrolipoyl]-L-lysyl-[glycine-cleavage complex H protein] + CO2. The glycine cleavage system catalyzes the degradation of glycine. The P protein binds the alpha-amino group of glycine through its pyridoxal phosphate cofactor; CO(2) is released and the remaining methylamine moiety is then transferred to the lipoamide cofactor of the H protein. The polypeptide is Glycine dehydrogenase (decarboxylating), mitochondrial (GDCSP) (Pisum sativum (Garden pea)).